Reading from the N-terminus, the 259-residue chain is uncharacterized protein (259 aa).

A signal peptide spans 1 to 22 (MKHSSKIIVFVSFLILTIFIGG). Cysteine 23 carries N-palmitoyl cysteine lipidation. A lipid anchor (S-diacylglycerol cysteine) is attached at cysteine 23.

Belongs to the staphylococcal tandem lipoprotein family.

The protein resides in the cell membrane. This is an uncharacterized protein from Staphylococcus epidermidis (strain ATCC 35984 / DSM 28319 / BCRC 17069 / CCUG 31568 / BM 3577 / RP62A).